A 262-amino-acid polypeptide reads, in one-letter code: MRIQIEKDQLGWVAGLLDSCGNIMFSKTHVSGNIEIKLKLTDYECLENMKTKYGGAVKVSRTGTRYRLNHSEGLKKLLEDINGQIRIPVRVKKVKEVCEKNNIEIKYPDKELSLDTAWLSGFFDGVGSIVINQTTLENKKQLVLTFNQKNNQILIKIQRIVGGNFYINTNTQSGKYKYALYFTSKEEILQLYEYFKKYPSRAYKNKRIGLIPQYYELQTLMTSIHDNQLQETLWKKFMIQWDYKEIDEIQSGEILKQKGVIR.

This sequence belongs to the LAGLIDADG endonuclease family.

It localises to the mitochondrion. In terms of biological role, mitochondrial DNA endonuclease involved in intron homing. The chain is Intron-encoded DNA endonuclease ai2b (ai2b) from Dictyostelium discoideum (Social amoeba).